Consider the following 332-residue polypeptide: tRNA dimethylallyltransferase (332 aa).

Residue 14 to 21 participates in ATP binding; the sequence is GPTASGKT. Residue 16–21 participates in substrate binding; the sequence is TASGKT. The tract at residues 39–42 is interaction with substrate tRNA; that stretch reads DSMQ. Residues 312-332 are disordered; sequence NKRSSNHDCKRKHPRPSTREL. Over residues 320–332 the composition is skewed to basic residues; it reads CKRKHPRPSTREL.

The protein belongs to the IPP transferase family. Monomer. Mg(2+) is required as a cofactor.

It carries out the reaction adenosine(37) in tRNA + dimethylallyl diphosphate = N(6)-dimethylallyladenosine(37) in tRNA + diphosphate. Catalyzes the transfer of a dimethylallyl group onto the adenine at position 37 in tRNAs that read codons beginning with uridine, leading to the formation of N6-(dimethylallyl)adenosine (i(6)A). This Staphylococcus epidermidis (strain ATCC 35984 / DSM 28319 / BCRC 17069 / CCUG 31568 / BM 3577 / RP62A) protein is tRNA dimethylallyltransferase.